Consider the following 223-residue polypeptide: uncharacterized protein (223 aa).

4 helical membrane passes run 22 to 42, 59 to 79, 85 to 105, and 164 to 184; these read LTVGLFVITFFNPGANLFVVV, GVALGDAFYSGLGLFGLATLI, IFSLIRIVGGAYLLWFAWCSM, and MAWAGIVLASIIWRVFLSQAF.

Belongs to the Rht family.

The protein resides in the cell membrane. This is an uncharacterized protein from Escherichia coli (strain K12).